We begin with the raw amino-acid sequence, 287 residues long: ATP synthase gamma chain (287 aa).

The protein belongs to the ATPase gamma chain family. F-type ATPases have 2 components, CF(1) - the catalytic core - and CF(0) - the membrane proton channel. CF(1) has five subunits: alpha(3), beta(3), gamma(1), delta(1), epsilon(1). CF(0) has three main subunits: a, b and c.

It is found in the cell inner membrane. In terms of biological role, produces ATP from ADP in the presence of a proton gradient across the membrane. The gamma chain is believed to be important in regulating ATPase activity and the flow of protons through the CF(0) complex. This chain is ATP synthase gamma chain, found in Salmonella paratyphi A (strain ATCC 9150 / SARB42).